Here is a 216-residue protein sequence, read N- to C-terminus: Cytidylate kinase (216 aa).

11–19 (GPAGAGKGT) contributes to the ATP binding site.

It belongs to the cytidylate kinase family. Type 1 subfamily.

The protein resides in the cytoplasm. The catalysed reaction is CMP + ATP = CDP + ADP. The enzyme catalyses dCMP + ATP = dCDP + ADP. In Mesorhizobium japonicum (strain LMG 29417 / CECT 9101 / MAFF 303099) (Mesorhizobium loti (strain MAFF 303099)), this protein is Cytidylate kinase.